The following is a 97-amino-acid chain: Large ribosomal subunit protein uL23 (97 aa).

This sequence belongs to the universal ribosomal protein uL23 family. Part of the 50S ribosomal subunit. Contacts protein L29, and trigger factor when it is bound to the ribosome.

Functionally, one of the early assembly proteins it binds 23S rRNA. One of the proteins that surrounds the polypeptide exit tunnel on the outside of the ribosome. Forms the main docking site for trigger factor binding to the ribosome. The sequence is that of Large ribosomal subunit protein uL23 from Methylococcus capsulatus (strain ATCC 33009 / NCIMB 11132 / Bath).